Here is a 435-residue protein sequence, read N- to C-terminus: Enolase (435 aa).

Residue glutamine 163 coordinates (2R)-2-phosphoglycerate. Glutamate 205 acts as the Proton donor in catalysis. Mg(2+) is bound by residues aspartate 243, glutamate 292, and aspartate 319. (2R)-2-phosphoglycerate contacts are provided by lysine 344, arginine 373, serine 374, and lysine 395. Lysine 344 acts as the Proton acceptor in catalysis.

It belongs to the enolase family. Mg(2+) is required as a cofactor.

Its subcellular location is the cytoplasm. The protein resides in the secreted. It localises to the cell surface. It catalyses the reaction (2R)-2-phosphoglycerate = phosphoenolpyruvate + H2O. The protein operates within carbohydrate degradation; glycolysis; pyruvate from D-glyceraldehyde 3-phosphate: step 4/5. Its function is as follows. Catalyzes the reversible conversion of 2-phosphoglycerate (2-PG) into phosphoenolpyruvate (PEP). It is essential for the degradation of carbohydrates via glycolysis. The polypeptide is Enolase (Streptococcus agalactiae serotype Ia (strain ATCC 27591 / A909 / CDC SS700)).